The sequence spans 713 residues: RNA-binding protein vts1 (713 aa).

Positions 154-188 (NSGLSLDKSLPSSPKGDSPSLSSSLPSLTTKSNLS) are enriched in low complexity. Disordered stretches follow at residues 154–208 (NSGL…SSKH), 254–336 (EPPA…RDRG), 356–389 (DESS…SRPL), 554–596 (EKIE…GNEL), and 667–713 (KAAK…SSMD). 2 stretches are compositionally biased toward polar residues: residues 189–208 (GNLN…SSKH) and 258–281 (SSAS…NANV). Low complexity-rich tracts occupy residues 282-297 (TSSL…SKTT) and 304-320 (SKKS…PNTS). Polar residues predominate over residues 321 to 330 (FFETPHNNIW). Residues 369-378 (SPPPPPPPPE) show a composition bias toward pro residues. Over residues 559-569 (PPNNSKNQTYR) the composition is skewed to polar residues. Residues 570 to 583 (RSSRGSNKTRKSIS) show a composition bias toward basic residues. One can recognise an SAM domain in the interval 595 to 656 (ELPQDIPSWL…LKSFQEVAPL (62 aa)). Residues 670–681 (KNQSSESLTSFK) show a composition bias toward polar residues. Residue serine 673 is modified to Phosphoserine. Positions 691 to 702 (SGSMSNEISSNS) are enriched in low complexity. A compositionally biased stretch (polar residues) spans 703–713 (TKQDVSSSSMD).

Belongs to the VTS1 family. As to quaternary structure, monomer. Binds to RNA.

The protein localises to the cytoplasm. Its subcellular location is the cytosol. It is found in the P-body. Functionally, RNA-binding protein involved in post-transcriptional regulation through transcript degradation. In Schizosaccharomyces pombe (strain 972 / ATCC 24843) (Fission yeast), this protein is RNA-binding protein vts1.